A 106-amino-acid chain; its full sequence is Large ribosomal subunit protein eL42 (106 aa).

The interval 36-56 (FAQGKRRYDRKQSGYGGQTKP) is disordered.

The protein belongs to the eukaryotic ribosomal protein eL42 family.

The sequence is that of Large ribosomal subunit protein eL42 (RPL44) from Coprinopsis cinerea (strain Okayama-7 / 130 / ATCC MYA-4618 / FGSC 9003) (Inky cap fungus).